The chain runs to 236 residues: uncharacterized protein (236 aa).

The 206-residue stretch at 3–208 (ILGLTGSIAT…PSYFFTLLCL (206 aa)) folds into the DPCK domain. 8-15 (GSIATGKS) contacts ATP. Phosphoserine occurs at positions 82 and 86.

It belongs to the CoaE family.

It is found in the cytoplasm. This is an uncharacterized protein from Schizosaccharomyces pombe (strain 972 / ATCC 24843) (Fission yeast).